Reading from the N-terminus, the 160-residue chain is Transcriptional repressor NrdR (160 aa).

The span at 1-11 (MRCPNCNSLDT) shows a compositional bias: polar residues. The segment at 1-20 (MRCPNCNSLDTQVKDSRPTE) is disordered. The segment at 3–34 (CPNCNSLDTQVKDSRPTEDSSVIRRRRVCIAC) is a zinc-finger region. The region spanning 49–139 (LTVIKRNGRR…VYRNFREAKD (91 aa)) is the ATP-cone domain.

Belongs to the NrdR family. The cofactor is Zn(2+).

Its function is as follows. Negatively regulates transcription of bacterial ribonucleotide reductase nrd genes and operons by binding to NrdR-boxes. The protein is Transcriptional repressor NrdR of Rhodopseudomonas palustris (strain BisB5).